A 218-amino-acid chain; its full sequence is Glycoprotein UL1 (218 aa).

A signal peptide spans 1–27; sequence MGVQCNSKLLLLAVLITIILSSILVQA. A helical transmembrane segment spans residues 178-198; that stretch reads VATHVGWTATVVIIICVLTYV.

This sequence belongs to the RL11 family.

It localises to the virion membrane. The polypeptide is Glycoprotein UL1 (UL1) (Homo sapiens (Human)).